Reading from the N-terminus, the 135-residue chain is ATP synthase epsilon chain, chloroplastic (135 aa).

Belongs to the ATPase epsilon chain family. As to quaternary structure, F-type ATPases have 2 components, CF(1) - the catalytic core - and CF(0) - the membrane proton channel. CF(1) has five subunits: alpha(3), beta(3), gamma(1), delta(1), epsilon(1). CF(0) has three main subunits: a, b and c.

The protein localises to the plastid. The protein resides in the chloroplast thylakoid membrane. In terms of biological role, produces ATP from ADP in the presence of a proton gradient across the membrane. The sequence is that of ATP synthase epsilon chain, chloroplastic from Euglena gracilis.